A 436-amino-acid chain; its full sequence is Probable glucose-6-phosphate isomerase (436 aa).

Glutamate 272 functions as the Proton donor in the catalytic mechanism. Residues histidine 293 and lysine 404 contribute to the active site.

Belongs to the GPI family.

The protein localises to the cytoplasm. The catalysed reaction is alpha-D-glucose 6-phosphate = beta-D-fructose 6-phosphate. It participates in carbohydrate biosynthesis; gluconeogenesis. The protein operates within carbohydrate degradation; glycolysis; D-glyceraldehyde 3-phosphate and glycerone phosphate from D-glucose: step 2/4. Catalyzes the reversible isomerization of glucose-6-phosphate to fructose-6-phosphate. The protein is Probable glucose-6-phosphate isomerase of Haloarcula marismortui (strain ATCC 43049 / DSM 3752 / JCM 8966 / VKM B-1809) (Halobacterium marismortui).